The primary structure comprises 126 residues: CD59 glycoprotein (126 aa).

Residues Met1 to Ser25 form the signal peptide. A UPAR/Ly6 domain is found at Leu26–Ser106. Cystine bridges form between Cys28–Cys51, Cys31–Cys38, Cys44–Cys64, Cys70–Cys88, and Cys89–Cys94. Asn43 carries an N-linked (GlcNAc...) asparagine glycan. Residue Asn100 is the site of GPI-anchor amidated asparagine attachment. The propeptide at Gly101 to Pro126 is removed in mature form.

Interacts with T-cell surface antigen CD2. In terms of processing, N- and O-glycosylated.

It is found in the cell membrane. The protein localises to the secreted. Potent inhibitor of the complement membrane attack complex (MAC) action, which protects self-cells from damage during complement activation. Acts by binding to the beta-haipins of C8 (C8A and C8B) components of the assembling MAC, forming an intermolecular beta-sheet that prevents incorporation of the multiple copies of C9 required for complete formation of the osmolytic pore. The polypeptide is CD59 glycoprotein (Papio sp. (Baboon)).